A 743-amino-acid polypeptide reads, in one-letter code: 1,4-alpha-glucan branching enzyme GlgB (743 aa).

Aspartate 423 functions as the Nucleophile in the catalytic mechanism. Catalysis depends on glutamate 476, which acts as the Proton donor.

Belongs to the glycosyl hydrolase 13 family. GlgB subfamily. As to quaternary structure, monomer.

The enzyme catalyses Transfers a segment of a (1-&gt;4)-alpha-D-glucan chain to a primary hydroxy group in a similar glucan chain.. It functions in the pathway glycan biosynthesis; glycogen biosynthesis. Catalyzes the formation of the alpha-1,6-glucosidic linkages in glycogen by scission of a 1,4-alpha-linked oligosaccharide from growing alpha-1,4-glucan chains and the subsequent attachment of the oligosaccharide to the alpha-1,6 position. The polypeptide is 1,4-alpha-glucan branching enzyme GlgB (Pseudomonas fluorescens (strain Pf0-1)).